Consider the following 302-residue polypeptide: D-alanine--D-alanine ligase (302 aa).

Residues Lys99–Asp298 enclose the ATP-grasp domain. Leu128–Thr183 contributes to the ATP binding site. The Mg(2+) site is built by Asp252, Glu265, and Asn267.

Belongs to the D-alanine--D-alanine ligase family. Mg(2+) serves as cofactor. The cofactor is Mn(2+).

Its subcellular location is the cytoplasm. The catalysed reaction is 2 D-alanine + ATP = D-alanyl-D-alanine + ADP + phosphate + H(+). It participates in cell wall biogenesis; peptidoglycan biosynthesis. Its function is as follows. Cell wall formation. This Gloeobacter violaceus (strain ATCC 29082 / PCC 7421) protein is D-alanine--D-alanine ligase.